The primary structure comprises 1119 residues: DNA-directed RNA polymerase D subunit 2b (1119 aa).

Asp732 is a Mg(2+) binding site. Zn(2+) is bound by residues Cys1055, Cys1058, Cys1080, and Cys1083. Residues 1055–1083 (CRKCKTYANVIERTPSSGRKIRGPYCRVC) form a C4-type zinc finger.

This sequence belongs to the RNA polymerase beta chain family. As to quaternary structure, component of the RNA polymerase IVa and IVb (Pol IV) complexes.

It localises to the nucleus. It carries out the reaction RNA(n) + a ribonucleoside 5'-triphosphate = RNA(n+1) + diphosphate. Its function is as follows. DNA-dependent RNA polymerase catalyzes the transcription of DNA into RNA using the four ribonucleoside triphosphates as substrates. Second largest component of RNA polymerase IVa and IVb which mediate short-interfering RNAs (siRNA) accumulation and subsequent RNA-directed DNA methylation-dependent (RdDM) silencing of endogenous repeated sequences, including transposable largest subunit. Also required for full erasure of methylation elements. Required for intercellular RNA interference (RNAi) leading to systemic post-transcriptional gene silencing. The sequence is that of DNA-directed RNA polymerase D subunit 2b (NRPD2b) from Arabidopsis thaliana (Mouse-ear cress).